We begin with the raw amino-acid sequence, 554 residues long: CTP synthase (554 aa).

The interval 1–265 is amidoligase domain; that stretch reads MTPLIFVTGG…DEIVIDQFKL (265 aa). A CTP-binding site is contributed by serine 13. Residue serine 13 coordinates UTP. ATP is bound by residues 14–19 and aspartate 71; that span reads SLGKGI. Aspartate 71 and glutamate 139 together coordinate Mg(2+). CTP contacts are provided by residues 146 to 148, 186 to 191, and lysine 222; these read DIE and KTKPTQ. UTP is bound by residues 186-191 and lysine 222; that span reads KTKPTQ. The Glutamine amidotransferase type-1 domain maps to 292-545; sequence TIAVVGKYVD…VKAARARKAG (254 aa). Residue glycine 353 participates in L-glutamine binding. Cysteine 380 (nucleophile; for glutamine hydrolysis) is an active-site residue. Residues 381-384, glutamate 404, and arginine 471 each bind L-glutamine; that span reads YGMQ. Catalysis depends on residues histidine 518 and glutamate 520.

It belongs to the CTP synthase family. As to quaternary structure, homotetramer.

It carries out the reaction UTP + L-glutamine + ATP + H2O = CTP + L-glutamate + ADP + phosphate + 2 H(+). The enzyme catalyses L-glutamine + H2O = L-glutamate + NH4(+). It catalyses the reaction UTP + NH4(+) + ATP = CTP + ADP + phosphate + 2 H(+). The protein operates within pyrimidine metabolism; CTP biosynthesis via de novo pathway; CTP from UDP: step 2/2. With respect to regulation, allosterically activated by GTP, when glutamine is the substrate; GTP has no effect on the reaction when ammonia is the substrate. The allosteric effector GTP functions by stabilizing the protein conformation that binds the tetrahedral intermediate(s) formed during glutamine hydrolysis. Inhibited by the product CTP, via allosteric rather than competitive inhibition. Functionally, catalyzes the ATP-dependent amination of UTP to CTP with either L-glutamine or ammonia as the source of nitrogen. Regulates intracellular CTP levels through interactions with the four ribonucleotide triphosphates. This Xylella fastidiosa (strain 9a5c) protein is CTP synthase.